Consider the following 384-residue polypeptide: MATEEMKKLATVMAIGTANPPNCYYQADFPDFYFRVTNSDHLINLKQKFKRLCENSRIEKRYLHVTEEILKENPNIAAYEATSLNVRHKMQVKGVAELGKEAALKAIKEWGQPKSKITHLIVCCLAGVDMPGADYQLTKLLDLDPSVKRFMFYHLGCYAGGTVLRLAKDIAENNKGARVLIVCSEMTTTCFRGPSETHLDSMIGQAILGDGAAAVIVGADPDLTVERPIFELVSTAQTIVPESHGAIEGHLLESGLSFHLYKTVPTLISNNIKTCLSDAFTPLNISDWNSLFWIAHPGGPAILDQVTAKVGLEKEKLKVTRQVLKDYGNMSSATVFFIMDEMRKKSLENGQATTGEGLEWGVLFGFGPGITVETVVLRSVPVIS.

Cys-157 acts as the Nucleophile and monoketide coumarate intermediate in catalysis. Cys-157 carries the post-translational modification S-(4-hydroxycinnamyl)cysteine.

This sequence belongs to the thiolase-like superfamily. Chalcone/stilbene synthases family. As to quaternary structure, homodimer.

It catalyses the reaction 4-coumaroyl-CoA + malonyl-CoA + H2O + H(+) = 4-hydroxybenzalacetone + 2 CO2 + 2 CoA. The protein operates within secondary metabolite biosynthesis; flavonoid biosynthesis. Functionally, polyketide synthase producing 4-hydroxybenzalacetone. Can use p-coumaryl-CoA as substrate but does not accept hexanoyl-CoA, isobutyryl-CoA, isovaleryl-CoA, and acetyl-CoA as a substrates. Catalyzes the initial key reaction step in the biosynthesis of phenylbutanoids. This Rheum palmatum (Chinese rhubarb) protein is Polyketide synthase BAS (BAS).